Reading from the N-terminus, the 278-residue chain is Ankyrin repeat and SOCS box protein 13 (278 aa).

6 ANK repeats span residues 18-47, 51-80, 84-113, 116-145, 149-178, and 181-210; these read VERT…CVNQ, DSIT…QVDA, DGST…KVNP, YTAS…NLEA, HFGT…NVNA, and LHET…NIYA. The SOCS box domain maps to 229 to 278; sequence AKCFEYYEKTPLTLSQLCRVNLRKATGVRGLEKIAKLNIPPRLIDYLSYN.

Belongs to the ankyrin SOCS box (ASB) family.

It functions in the pathway protein modification; protein ubiquitination. In terms of biological role, may be a substrate-recognition component of a SCF-like ECS (Elongin-Cullin-SOCS-box protein) E3 ubiquitin-protein ligase complex which mediates the ubiquitination and subsequent proteasomal degradation of target proteins. The chain is Ankyrin repeat and SOCS box protein 13 (ASB13) from Homo sapiens (Human).